The following is a 717-amino-acid chain: Radial spoke head protein 6 homolog A (717 aa).

Disordered stretches follow at residues 1 to 65 (MGDL…SLSQ), 503 to 523 (SEEE…YEEN), 563 to 588 (TEEE…QEVG), and 672 to 717 (GPEI…ETDD). 3 stretches are compositionally biased toward acidic residues: residues 503–513 (SEEEGDEEEEG), 564–585 (EEEE…EVEQ), and 700–717 (TEEE…ETDD).

Belongs to the flagellar radial spoke RSP4/6 family. As to quaternary structure, component of the axonemal radial spoke 1 (RS1) and 2 (RS2) complexes, at least composed of spoke head proteins RSPH1, RSPH3, RSPH9 and the cilia-specific component RSPH4A or sperm-specific component RSPH6A, spoke stalk proteins RSPH14, DNAJB13, DYDC1, ROPN1L and NME5, and the RS1 complex-specific anchor protein IQUB. Interacts with RSPH1. Interacts with RSPH3B. Interacts with RSPH4A. Interacts with RSPH9. Interacts with RSPH10B. Post-translationally, phosphorylated by PKA. Phosphorylation increases in capacitated sperm.

Its subcellular location is the cytoplasm. It is found in the cytoskeleton. The protein localises to the flagellum axoneme. Functionally, functions as part of radial spoke complexes in the axoneme of sperm flagella that play an important part in motility. The triple radial spokes (RS1, RS2 and RS3) are required to modulate beating of the sperm flagellum. The protein is Radial spoke head protein 6 homolog A of Homo sapiens (Human).